Consider the following 90-residue polypeptide: DNA-binding protein HU-alpha (90 aa).

This sequence belongs to the bacterial histone-like protein family. In terms of assembly, heterodimer of an alpha and a beta chain.

Functionally, histone-like DNA-binding protein which is capable of wrapping DNA to stabilize it, and thus to prevent its denaturation under extreme environmental conditions. This chain is DNA-binding protein HU-alpha (hupA), found in Aeromonas hydrophila.